A 268-amino-acid chain; its full sequence is Zinc transporter ZupT (268 aa).

Helical transmembrane passes span 6 to 26 (LAFL…LIAF), 37 to 57 (SFAL…DIFF), 70 to 90 (TQGY…IGFI), 125 to 145 (GLFT…ATFV), and 152 to 172 (SIGL…GIAV). Fe(2+)-binding residues include Asn136 and Glu139. 2 residues coordinate Zn(2+): Glu139 and His164. Fe(2+) is bound by residues Asn165, Glu168, and Glu197. A Zn(2+)-binding site is contributed by Glu168. The next 2 helical transmembrane spans lie at 201-221 (AIVA…GIIF) and 248-268 (MSMY…LLLA).

It belongs to the ZIP transporter (TC 2.A.5) family. ZupT subfamily.

It is found in the cell membrane. The enzyme catalyses Zn(2+)(in) = Zn(2+)(out). Its function is as follows. Mediates zinc uptake. May also transport other divalent cations. The sequence is that of Zinc transporter ZupT from Oceanobacillus iheyensis (strain DSM 14371 / CIP 107618 / JCM 11309 / KCTC 3954 / HTE831).